Reading from the N-terminus, the 375-residue chain is MSAARQGVAQARRIVVKVGSSSLTTAAGGLDADRVDALVDVLAKSRSGGEKEIVLVSSGAIAAGLAPLGLRRRPKDLARQQAAASVGQGLLVARYTASCARHGIRVGQVLLTSDDTSRRAHHRNASRTLDKLLAMGALPVVNENDTVATDEIRFGDNDRLAALVAHLVRADLLVLLSDVDGVYDGDPSKPGTSRVAQVHGPQDLAHVEIGSAGRAGVGTGGMVTKIEAARIAAAAGIPVVLTSAVHAADALAGRDTGTYFHPTGKRSADRLLWLQHASTPQGALTLDDGAVRAVVERRKSLLPAGIAAVEGEFTAGDPVELRDSEGRAVARGLVSFDAKEIPQLLGRSTRELARELGPAYEREVVHRDDLVLLQP.

An ATP-binding site is contributed by Lys-17. Ser-58, Asp-145, and Asn-157 together coordinate substrate. Residues 177 to 178 (SD) and 219 to 225 (TGGMVTK) each bind ATP. A PUA domain is found at 281-359 (QGALTLDDGA…RELARELGPA (79 aa)).

It belongs to the glutamate 5-kinase family.

The protein resides in the cytoplasm. The catalysed reaction is L-glutamate + ATP = L-glutamyl 5-phosphate + ADP. It functions in the pathway amino-acid biosynthesis; L-proline biosynthesis; L-glutamate 5-semialdehyde from L-glutamate: step 1/2. Functionally, catalyzes the transfer of a phosphate group to glutamate to form L-glutamate 5-phosphate. The polypeptide is Glutamate 5-kinase (Streptomyces avermitilis (strain ATCC 31267 / DSM 46492 / JCM 5070 / NBRC 14893 / NCIMB 12804 / NRRL 8165 / MA-4680)).